The chain runs to 145 residues: Large ribosomal subunit protein uL15 (145 aa).

The segment at 1 to 57 (MKLNDLSPAPGSRREKHRPGRGIGSGLGKTGGRGHKGQTSRSGGTIAPGFEGGQQPL) is disordered. Positions 21–31 (RGIGSGLGKTG) are enriched in gly residues.

It belongs to the universal ribosomal protein uL15 family. Part of the 50S ribosomal subunit.

Its function is as follows. Binds to the 23S rRNA. This Pseudomonas fluorescens (strain Pf0-1) protein is Large ribosomal subunit protein uL15.